A 252-amino-acid polypeptide reads, in one-letter code: NAD(P)H-quinone oxidoreductase subunit K (252 aa).

Residues C73, C74, C138, and C169 each contribute to the [4Fe-4S] cluster site. Over residues 225–236 (ASTQKQALSPSQ) the composition is skewed to polar residues. A disordered region spans residues 225–252 (ASTQKQALSPSQEIPLEDQNEATKEIAQ).

It belongs to the complex I 20 kDa subunit family. As to quaternary structure, NDH-1 can be composed of about 15 different subunits; different subcomplexes with different compositions have been identified which probably have different functions. [4Fe-4S] cluster serves as cofactor.

Its subcellular location is the cellular thylakoid membrane. The catalysed reaction is a plastoquinone + NADH + (n+1) H(+)(in) = a plastoquinol + NAD(+) + n H(+)(out). The enzyme catalyses a plastoquinone + NADPH + (n+1) H(+)(in) = a plastoquinol + NADP(+) + n H(+)(out). Its function is as follows. NDH-1 shuttles electrons from an unknown electron donor, via FMN and iron-sulfur (Fe-S) centers, to quinones in the respiratory and/or the photosynthetic chain. The immediate electron acceptor for the enzyme in this species is believed to be plastoquinone. Couples the redox reaction to proton translocation, and thus conserves the redox energy in a proton gradient. Cyanobacterial NDH-1 also plays a role in inorganic carbon-concentration. The polypeptide is NAD(P)H-quinone oxidoreductase subunit K (Prochlorococcus marinus (strain MIT 9211)).